A 379-amino-acid polypeptide reads, in one-letter code: Homoserine O-succinyltransferase (379 aa).

In terms of domain architecture, AB hydrolase-1 spans Asn51–Leu360. The active-site Nucleophile is Ser157. Arg227 is a substrate binding site. Active-site residues include Asp323 and His356. Asp357 lines the substrate pocket.

This sequence belongs to the AB hydrolase superfamily. MetX family. In terms of assembly, homodimer.

Its subcellular location is the cytoplasm. The catalysed reaction is L-homoserine + succinyl-CoA = O-succinyl-L-homoserine + CoA. The protein operates within amino-acid biosynthesis; L-methionine biosynthesis via de novo pathway; O-succinyl-L-homoserine from L-homoserine: step 1/1. Transfers a succinyl group from succinyl-CoA to L-homoserine, forming succinyl-L-homoserine. The sequence is that of Homoserine O-succinyltransferase from Pseudomonas putida (strain W619).